Here is a 175-residue protein sequence, read N- to C-terminus: Large ribosomal subunit protein uL10 (175 aa).

This sequence belongs to the universal ribosomal protein uL10 family. In terms of assembly, part of the ribosomal stalk of the 50S ribosomal subunit. The N-terminus interacts with L11 and the large rRNA to form the base of the stalk. The C-terminus forms an elongated spine to which L12 dimers bind in a sequential fashion forming a multimeric L10(L12)X complex.

Functionally, forms part of the ribosomal stalk, playing a central role in the interaction of the ribosome with GTP-bound translation factors. The sequence is that of Large ribosomal subunit protein uL10 from Synechococcus elongatus (strain ATCC 33912 / PCC 7942 / FACHB-805) (Anacystis nidulans R2).